The following is a 64-amino-acid chain: Chromatin protein Cren7 (64 aa).

It belongs to the Cren7 family. As to quaternary structure, monomer. Methylated at multiple sites, to varying extents.

It localises to the chromosome. It is found in the cytoplasm. Functionally, a chromatin protein, binds double-stranded DNA without sequence specificity. Constrains negative DNA supercoils. This is Chromatin protein Cren7 from Aeropyrum pernix (strain ATCC 700893 / DSM 11879 / JCM 9820 / NBRC 100138 / K1).